Reading from the N-terminus, the 293-residue chain is Ribosomal protein L11 methyltransferase (293 aa).

S-adenosyl-L-methionine-binding residues include T145, G166, D188, and N230.

This sequence belongs to the methyltransferase superfamily. PrmA family.

The protein localises to the cytoplasm. It carries out the reaction L-lysyl-[protein] + 3 S-adenosyl-L-methionine = N(6),N(6),N(6)-trimethyl-L-lysyl-[protein] + 3 S-adenosyl-L-homocysteine + 3 H(+). Its function is as follows. Methylates ribosomal protein L11. This Actinobacillus pleuropneumoniae serotype 7 (strain AP76) protein is Ribosomal protein L11 methyltransferase.